The chain runs to 98 residues: DNA-binding protein Fis (98 aa).

Positions 74–93 form a DNA-binding region, H-T-H motif; the sequence is QTRAALMMGINRGTLRKKLK.

It belongs to the transcriptional regulatory Fis family. Homodimer.

Functionally, activates ribosomal RNA transcription. Plays a direct role in upstream activation of rRNA promoters. This chain is DNA-binding protein Fis, found in Enterobacter sp. (strain 638).